The sequence spans 296 residues: NAD kinase (296 aa).

D72 (proton acceptor) is an active-site residue. NAD(+) is bound by residues 72 to 73 (DG), 146 to 147 (ND), R157, K174, D176, 187 to 192 (TAYALS), and Q247.

It belongs to the NAD kinase family. A divalent metal cation serves as cofactor.

Its subcellular location is the cytoplasm. The catalysed reaction is NAD(+) + ATP = ADP + NADP(+) + H(+). Involved in the regulation of the intracellular balance of NAD and NADP, and is a key enzyme in the biosynthesis of NADP. Catalyzes specifically the phosphorylation on 2'-hydroxyl of the adenosine moiety of NAD to yield NADP. The chain is NAD kinase from Pseudomonas putida (strain W619).